The primary structure comprises 83 residues: Conotoxin p21a (83 aa).

4-hydroxyproline; partial occurs at positions 24 and 43. Histidine 83 is subject to Histidine amide.

May form a non-covalent dimer. Post-translationally, contains 5 disulfide bonds. Expressed by the venom duct.

It is found in the secreted. The chain is Conotoxin p21a from Conus purpurascens (Purple cone).